The sequence spans 548 residues: MKKVTAMLFSMAVGLNAVSMAAKAKASEEQETDVLLIGGGIMSATLGTYLRELEPEWSMTMVERLEGVAQESSNGWNNAGTGHSALMELNYTPQNADGSISIEKAVAINEAFQISRQFWAHQVERGVLRTPRSFINTVPHMSFVWGEDNVNFLRARYAALQQSSLFRGMRYSEDHAQIKEWAPLVMEGRDPQQKVAATRTEIGTDVNYGEITRQLIASLQKKSNFSLQLSSEVRALKRNDDNTWTVTVADLKNGTAQNIRAKFVFIGAGGAALKLLQESGIPEAKDYAGFPVGGQFLVSENPDVVNHHLAKVYGKASVGAPPMSVPHIDTRVLDGKRVVLFGPFATFSTKFLKNGSLWDLMSSTTTSNVMPMMHVGLDNFDLVKYLVSQVMLSEEDRFEALKEYYPQAKKEDWRLWQAGQRVQIIKRDAEKGGVLRLGTEVVSDQQGTIAALLGASPGASTAAPIMLDLLEKVFGDRVSSPQWQATLKAIVPSYGRKLNGDVAATERELQYTSEVLGLKYDKPQAADSTPKPQLKPKPVQKEVADIAL.

Positions 521-548 (DKPQAADSTPKPQLKPKPVQKEVADIAL) are disordered. Over residues 539 to 548 (VQKEVADIAL) the composition is skewed to basic and acidic residues.

This sequence belongs to the MQO family. FAD is required as a cofactor.

The catalysed reaction is (S)-malate + a quinone = a quinol + oxaloacetate. Its pathway is carbohydrate metabolism; tricarboxylic acid cycle; oxaloacetate from (S)-malate (quinone route): step 1/1. The polypeptide is Probable malate:quinone oxidoreductase (Escherichia coli (strain ATCC 8739 / DSM 1576 / NBRC 3972 / NCIMB 8545 / WDCM 00012 / Crooks)).